Reading from the N-terminus, the 39-residue chain is uncharacterized protein (39 aa).

The protein belongs to the orthopoxvirus A30.5 protein family.

This is an uncharacterized protein from Bos taurus (Bovine).